Consider the following 89-residue polypeptide: Small ribosomal subunit protein uS15 (89 aa).

It belongs to the universal ribosomal protein uS15 family. In terms of assembly, part of the 30S ribosomal subunit. Forms a bridge to the 50S subunit in the 70S ribosome, contacting the 23S rRNA.

Functionally, one of the primary rRNA binding proteins, it binds directly to 16S rRNA where it helps nucleate assembly of the platform of the 30S subunit by binding and bridging several RNA helices of the 16S rRNA. Forms an intersubunit bridge (bridge B4) with the 23S rRNA of the 50S subunit in the ribosome. The chain is Small ribosomal subunit protein uS15 from Herminiimonas arsenicoxydans.